Reading from the N-terminus, the 89-residue chain is UPF0237 protein CE1668 (89 aa).

Positions 4–78 (IMTVTGQDHT…KEQGLVIRIQ (75 aa)) constitute an ACT domain.

It belongs to the UPF0237 family.

This is UPF0237 protein CE1668 from Corynebacterium efficiens (strain DSM 44549 / YS-314 / AJ 12310 / JCM 11189 / NBRC 100395).